A 139-amino-acid chain; its full sequence is MQLVREKRGAHQHVPRKTTEPQKVRGDGICPERMSLLMMINWPFVDSTVHLETVDALMRYEGVQPPPFDPVNDSSRKYIMDRWIPWFVTNCERPSNTELYTLVSKIREDAIVFGASIVTTLTHLVPQREVRNKCRLKII.

The tract at residues 1 to 26 is disordered; sequence MQLVREKRGAHQHVPRKTTEPQKVRG. Residues 17 to 26 are compositionally biased toward basic and acidic residues; it reads KTTEPQKVRG.

This is an uncharacterized protein from Ictalurid herpesvirus 1 (strain Auburn) (IcHV-1).